A 41-amino-acid polypeptide reads, in one-letter code: Large ribosomal subunit protein bL36 (41 aa).

It belongs to the bacterial ribosomal protein bL36 family.

This Rickettsia massiliae (strain Mtu5) protein is Large ribosomal subunit protein bL36.